Here is a 127-residue protein sequence, read N- to C-terminus: Holo-[acyl-carrier-protein] synthase (127 aa).

Mg(2+) is bound by residues aspartate 9 and glutamate 58.

This sequence belongs to the P-Pant transferase superfamily. AcpS family. The cofactor is Mg(2+).

The protein localises to the cytoplasm. The enzyme catalyses apo-[ACP] + CoA = holo-[ACP] + adenosine 3',5'-bisphosphate + H(+). In terms of biological role, transfers the 4'-phosphopantetheine moiety from coenzyme A to a Ser of acyl-carrier-protein. The polypeptide is Holo-[acyl-carrier-protein] synthase (Shewanella baltica (strain OS155 / ATCC BAA-1091)).